A 119-amino-acid chain; its full sequence is Hydrogenase maturation factor HypA (119 aa).

H2 lines the Ni(2+) pocket. 4 residues coordinate Zn(2+): C73, C76, C90, and C93.

Belongs to the HypA/HybF family.

Its function is as follows. Involved in the maturation of [NiFe] hydrogenases. Required for nickel insertion into the metal center of the hydrogenase. The protein is Hydrogenase maturation factor HypA of Wolinella succinogenes (strain ATCC 29543 / DSM 1740 / CCUG 13145 / JCM 31913 / LMG 7466 / NCTC 11488 / FDC 602W) (Vibrio succinogenes).